Here is a 343-residue protein sequence, read N- to C-terminus: Nod factor export ATP-binding protein I (343 aa).

A compositionally biased stretch (polar residues) spans 1 to 14 (MQLLTRANVSSSPS). The interval 1-38 (MQLLTRANVSSSPSRRPESNALKQKCHGHSNADNSLSR) is disordered. One can recognise an ABC transporter domain in the interval 45–275 (IELTNVSKSY…QIGCDVIEIY (231 aa)). 77 to 84 (GPNGAGKS) serves as a coordination point for ATP.

The protein belongs to the ABC transporter superfamily. Lipooligosaccharide exporter (TC 3.A.1.102) family. The complex is composed of two ATP-binding proteins (NodI) and two transmembrane proteins (NodJ).

The protein localises to the cell inner membrane. Its function is as follows. Part of the ABC transporter complex NodIJ involved in the export of the nodulation factors (Nod factors), the bacterial signal molecules that induce symbiosis and subsequent nodulation induction. Nod factors are LCO (lipo-chitin oligosaccharide), a modified beta-1,4-linked N-acetylglucosamine oligosaccharide. This subunit is responsible for energy coupling to the transport system. The polypeptide is Nod factor export ATP-binding protein I (Sinorhizobium fredii (strain NBRC 101917 / NGR234)).